Reading from the N-terminus, the 834-residue chain is Periplasmic nitrate reductase (834 aa).

The segment at residues Met1–Ala29 is a signal peptide (tat-type signal). The 57-residue stretch at Leu41–Asp97 folds into the 4Fe-4S Mo/W bis-MGD-type domain. Cys48, Cys51, Cys55, and Cys83 together coordinate [4Fe-4S] cluster. Residues Lys85, Gln152, Asn177, Cys181, Trp214 to Met221, Ser245 to His249, Gln264 to Asp266, Met375, Gln379, Asn485, Ser511 to Asp512, Lys534, Asp561, and Thr721 to Thr730 contribute to the Mo-bis(molybdopterin guanine dinucleotide) site. Residue Phe797 coordinates substrate. 2 residues coordinate Mo-bis(molybdopterin guanine dinucleotide): Asn805 and Lys822.

The protein belongs to the prokaryotic molybdopterin-containing oxidoreductase family. NasA/NapA/NarB subfamily. Component of the periplasmic nitrate reductase NapAB complex composed of NapA and NapB. [4Fe-4S] cluster is required as a cofactor. Mo-bis(molybdopterin guanine dinucleotide) serves as cofactor. Predicted to be exported by the Tat system. The position of the signal peptide cleavage has not been experimentally proven.

The protein localises to the periplasm. It catalyses the reaction 2 Fe(II)-[cytochrome] + nitrate + 2 H(+) = 2 Fe(III)-[cytochrome] + nitrite + H2O. Functionally, catalytic subunit of the periplasmic nitrate reductase complex NapAB. Receives electrons from NapB and catalyzes the reduction of nitrate to nitrite. This is Periplasmic nitrate reductase from Ectopseudomonas mendocina (strain ymp) (Pseudomonas mendocina).